A 527-amino-acid chain; its full sequence is Calcium and calcium/calmodulin-dependent serine/threonine-protein kinase (527 aa).

One can recognise a Protein kinase domain in the interval 12–314 (YEVSEILGRG…AQELLSDPWV (303 aa)). 18–26 (LGRGGFSVV) contributes to the ATP binding site. The disordered stretch occupies residues 25-51 (VVRKGTRKSNNDDEKSQSQSKSQSQSQ). Positions 41 to 51 (QSQSKSQSQSQ) are enriched in low complexity. Lys-55 provides a ligand contact to ATP. The segment at 59 to 78 (RLGTSNNLPRKKDGGENSTE) is disordered. Asp-179 (proton acceptor) is an active-site residue. The helical transmembrane segment at 239–255 (MWSLGVILYILLSGYPP) threads the bilayer. Residue Thr-279 is modified to Phosphothreonine. The calmodulin-binding stretch occupies residues 337 to 350 (ARRKLRAAAIASVW). Residues 358–379 (TKKLKSLVGSYDLKEDEIENLR) are a coiled coil. EF-hand domains lie at 408-443 (SLIP…LKNS), 444-479 (KGED…LPYD), and 486-521 (TEPG…DSSL). Residues Asp-421, Asn-423, Asp-425, Thr-427, Glu-432, Asp-457, Asp-459, Ser-461, Cys-463, Glu-468, Asp-499, Asn-501, Asp-503, Lys-505, and Glu-510 each coordinate Ca(2+).

Belongs to the protein kinase superfamily. CAMK Ser/Thr protein kinase family. CaMK subfamily. In terms of processing, autophosphorylation.

The protein resides in the membrane. The enzyme catalyses L-seryl-[protein] + ATP = O-phospho-L-seryl-[protein] + ADP + H(+). The catalysed reaction is L-threonyl-[protein] + ATP = O-phospho-L-threonyl-[protein] + ADP + H(+). Activated by calcium. Autophosphorylation may play an important role in the regulation of the kinase activity. In terms of biological role, protein kinase that recognizes the calcium spiking induced by Nod factors and translates this signal to components controlling nodulation and mycorrhizal infection responses. In Pisum sativum (Garden pea), this protein is Calcium and calcium/calmodulin-dependent serine/threonine-protein kinase (SYM9).